The sequence spans 725 residues: Dynein axonemal assembly factor 1 (725 aa).

The segment at 1–91 (MHPEPSEPAT…EDRGPRMTKS (91 aa)) is disordered. Basic and acidic residues predominate over residues 38–48 (GCKEEINDPKE). A compositionally biased stretch (polar residues) spans 53–67 (SSDTSYHSQQKQSGD). The segment covering 76–86 (HPREDREDRGP) has biased composition (basic and acidic residues). LRR repeat units lie at residues 107–129 (ALND…EEYT), 130–151 (GLRC…EAQT), 152–173 (ELRC…EPLQ), 174–195 (KLDA…SCLP), 196–217 (VLNT…QHLQ), and 221–242 (RLCV…SILE). In terms of domain architecture, LRRCT spans 256-294 (PVIRQIPNYRRTVTVRLKHLTYLDDRPVFPKDRACAEAW). Over residues 330–345 (RAEERKRQRESQERGE) the composition is skewed to basic and acidic residues. Residues 330–513 (RAEERKRQRE…LGAAREEPTP (184 aa)) are disordered. Serine 358 carries the post-translational modification Phosphoserine. Basic and acidic residues-rich tracts occupy residues 360 to 408 (EGKE…REDG) and 481 to 491 (VKGEDGDREPE). Phosphothreonine is present on threonine 559. Phosphoserine occurs at positions 562 and 583. Residues 632-642 (DLEIRKQDTKS) show a composition bias toward basic and acidic residues. Positions 632-703 (DLEIRKQDTK…AATPPETCVG (72 aa)) are disordered.

The protein belongs to the DNAAF1 family. Mainly expressed in trachea and testis.

It localises to the cell projection. It is found in the cilium. The protein localises to the cytoplasm. The protein resides in the cytoskeleton. Its subcellular location is the spindle pole. Cilium-specific protein required for the stability of the ciliary architecture. Plays a role in cytoplasmic preassembly of dynein arms. Involved in regulation of microtubule-based cilia and actin-based brush border microvilli. This is Dynein axonemal assembly factor 1 (DNAAF1) from Homo sapiens (Human).